Here is a 90-residue protein sequence, read N- to C-terminus: Protein RALF-like 3 (90 aa).

An N-terminal signal peptide occupies residues 1–29; sequence MSNLRGTNRFILVAVLVSFVFLSIMNAEA. 2 cysteine pairs are disulfide-bonded: cysteine 59–cysteine 67 and cysteine 80–cysteine 86.

The protein belongs to the plant rapid alkalinization factor (RALF) family.

It is found in the secreted. Cell signaling peptide that may regulate plant stress, growth, and development. Mediates a rapid alkalinization of extracellular space by mediating a transient increase in the cytoplasmic Ca(2+) concentration leading to a calcium-dependent signaling events through a cell surface receptor and a concomitant activation of some intracellular mitogen-activated protein kinases. This is Protein RALF-like 3 (RALFL3) from Arabidopsis thaliana (Mouse-ear cress).